The primary structure comprises 35 residues: Photosystem II reaction center protein M (35 aa).

The helical transmembrane segment at 7 to 27 (GFLASLLFVLVPSVFLIVLYI) threads the bilayer.

The protein belongs to the PsbM family. As to quaternary structure, PSII is composed of 1 copy each of membrane proteins PsbA, PsbB, PsbC, PsbD, PsbE, PsbF, PsbH, PsbI, PsbJ, PsbK, PsbL, PsbM, PsbT, PsbX, PsbY, PsbZ, Psb30/Ycf12, peripheral proteins PsbO, CyanoQ (PsbQ), PsbU, PsbV and a large number of cofactors. It forms dimeric complexes.

It localises to the cellular thylakoid membrane. One of the components of the core complex of photosystem II (PSII). PSII is a light-driven water:plastoquinone oxidoreductase that uses light energy to abstract electrons from H(2)O, generating O(2) and a proton gradient subsequently used for ATP formation. It consists of a core antenna complex that captures photons, and an electron transfer chain that converts photonic excitation into a charge separation. This subunit is found at the monomer-monomer interface. The protein is Photosystem II reaction center protein M of Synechococcus elongatus (strain ATCC 33912 / PCC 7942 / FACHB-805) (Anacystis nidulans R2).